Here is a 253-residue protein sequence, read N- to C-terminus: MKLMDVRVSGLNVWITDKHILKGISFKAQPGTVTAIMGPSGSGKSTLIRVINRLIDLIPGARVEGEVWINNMNVMKEDPYNIRRYTGMVFQEPNPFPHMTIYENVAIGPKLHGLAKNKKELDEIVEWALKMAHLWDEVKDRLSDYPHQLSGGQRQRLSLARALALKPRVLLLDEPTANIDPVSTVKIEQSIVEYAKEEMATVIIVTHTPQQAARISDQILFLYEGRVIEYGPTKELVLRPRHELTKKFLGGEV.

The ABC transporter domain occupies 1 to 249 (MKLMDVRVSG…PRHELTKKFL (249 aa)). 38-45 (GPSGSGKS) serves as a coordination point for ATP.

This sequence belongs to the ABC transporter superfamily. Phosphate importer (TC 3.A.1.7) family. In terms of assembly, the complex is composed of two ATP-binding proteins (PstB), two transmembrane proteins (PstC and PstA) and a solute-binding protein (PstS).

The protein localises to the cell membrane. It catalyses the reaction phosphate(out) + ATP + H2O = ADP + 2 phosphate(in) + H(+). In terms of biological role, part of the ABC transporter complex PstSACB involved in phosphate import. Responsible for energy coupling to the transport system. This is Phosphate import ATP-binding protein PstB from Aeropyrum pernix (strain ATCC 700893 / DSM 11879 / JCM 9820 / NBRC 100138 / K1).